The chain runs to 236 residues: tRNA (guanine-N(1)-)-methyltransferase (236 aa).

Residues Gly112 and 132-137 (VGDFIL) contribute to the S-adenosyl-L-methionine site.

It belongs to the RNA methyltransferase TrmD family. Homodimer.

The protein localises to the cytoplasm. It catalyses the reaction guanosine(37) in tRNA + S-adenosyl-L-methionine = N(1)-methylguanosine(37) in tRNA + S-adenosyl-L-homocysteine + H(+). In terms of biological role, specifically methylates guanosine-37 in various tRNAs. The protein is tRNA (guanine-N(1)-)-methyltransferase of Campylobacter curvus (strain 525.92).